Here is a 470-residue protein sequence, read N- to C-terminus: Retinoic acid receptor RXR-gamma (470 aa).

The tract at residues 1 to 145 (MHLATETAPS…NSPGALTKHI (145 aa)) is modulating. 2 consecutive NR C4-type zinc fingers follow at residues 146-166 (CAICGDRSSGKHYGVYSCEGC) and 182-206 (CRDSKDCLIDKRQRNRCQYCRYQKC). Positions 146–211 (CAICGDRSSG…RYQKCLAMGM (66 aa)) form a DNA-binding region, nuclear receptor. The hinge stretch occupies residues 212–235 (KREAVQEERQRSREKSDTEAESTS). Residues 217-229 (QEERQRSREKSDT) show a composition bias toward basic and acidic residues. The disordered stretch occupies residues 217 to 242 (QEERQRSREKSDTEAESTSSTSEEMP). One can recognise an NR LBD domain in the interval 238-466 (SEEMPVERIL…TFLMEMLETP (229 aa)).

This sequence belongs to the nuclear hormone receptor family. NR2 subfamily. In terms of assembly, homodimer. Heterodimer; with a rar molecule. Binds DNA preferentially as a rar/rxr heterodimer.

Its subcellular location is the nucleus. In terms of biological role, receptor for retinoic acid. Retinoic acid receptors bind as heterodimers to their target response elements in response to their ligands, all-trans or 9-cis retinoic acid, and regulate gene expression in various biological processes. The rar/rxr heterodimers bind to the retinoic acid response elements (RARE) composed of tandem 5'-AGGTCA-3' sites known as DR1-DR5. The high affinity ligand for rxrs is 9-cis retinoic acid. The sequence is that of Retinoic acid receptor RXR-gamma (rxrg) from Xenopus laevis (African clawed frog).